The primary structure comprises 500 residues: Zinc finger protein ENHYDROUS (500 aa).

A disordered region spans residues 1–42; the sequence is MPVDLDNSSTVSGDASVSSTGNQNLTPKSVGKKKRNLPGMPD. Residues 8-21 show a composition bias toward low complexity; that stretch reads SSTVSGDASVSSTG. Ser51 carries the post-translational modification Phosphoserine. 2 consecutive C2H2-type zinc fingers follow at residues 61-83 and 102-132; these read FVCE…RRGH and YVCP…CRKH. Positions 124–131 match the Nuclear localization signal motif; sequence IKKHFCRK. The C2H2-type 2; degenerate zinc-finger motif lies at 137–160; that stretch reads WKCEKCSKKYAVQSDWKAHSKICG. Cys139, Cys142, His155, Cys159, Cys166, Cys168, His181, and Cys185 together coordinate Zn(2+). The CCHC-type 2; atypical zinc-finger motif lies at 164–187; that stretch reads YKCDCGTLFSRRDSFITHRAFCDA. The SHR-binding stretch occupies residues 174 to 186; the sequence is RRDSFITHRAFCD. The tract at residues 196 to 236 is disordered; the sequence is HTQSKKLYPETVTRKNPEIEQKSPAAVESSPSLPPSSPPSV. Over residues 207 to 216 the composition is skewed to basic and acidic residues; sequence VTRKNPEIEQ.

Interacts with the DELLA proteins (e.g. GAI/RGA2, RGA, RGL1, RGL2 and RGLG3), acting as coactivators. In terms of tissue distribution, at 3 days post anthesis (DPA), expressed in the chalazal endosperm region. By 6 DPA, expressed in the endosperm and embryo. In fully germinated seed, strongest expression in the root tip and not detected in the cotyledons. In 4-days old seedlings, restricted to the vasculature of the cotyledons, the shoot apical meristem region, and the root tip. By 8 days, restricted to newly emerged leaves.

It localises to the nucleus. Functionally, transcription factor promoting the transition to germination by regulating light and hormonal signaling during seed maturation. Acts as a positive regulator of phytochrome and/or gibberellin action. The protein is Zinc finger protein ENHYDROUS of Arabidopsis thaliana (Mouse-ear cress).